The sequence spans 295 residues: uncharacterized protein (295 aa).

The protein localises to the plastid. Its subcellular location is the chloroplast. This is an uncharacterized protein from Euglena gracilis.